We begin with the raw amino-acid sequence, 901 residues long: Protein SOK1 (901 aa).

3 disordered regions span residues 1–87, 106–139, and 162–231; these read MDQP…QNII, RSSG…SDLK, and NDDN…NASN. Positions 10 to 51 are enriched in low complexity; sequence PTTASNPAPSSTNSSSAPSATNSKQERSSSSLSKPSSVVPSK. Residues serine 40 and serine 53 each carry the phosphoserine modification. Polar residues-rich tracts occupy residues 74 to 87 and 106 to 115; these read GDTS…QNII and RSSGVITPSM. Low complexity predominate over residues 116 to 138; sequence SLNASTNATNNDSSGNSANSSDL. Residues serine 191 and serine 193 each carry the phosphoserine modification. Residues 220–231 show a composition bias toward polar residues; sequence AAQQQPPGNASN. Serine 245 carries the phosphoserine modification.

This sequence belongs to the TCP11 family.

It localises to the nucleus. Its function is as follows. High copy suppressor of a cyclic AMP-dependent protein kinase mutant. The polypeptide is Protein SOK1 (SOK1) (Saccharomyces cerevisiae (strain ATCC 204508 / S288c) (Baker's yeast)).